We begin with the raw amino-acid sequence, 273 residues long: Large ribosomal subunit protein uL2 (273 aa).

The disordered stretch occupies residues 224–263 (AMNPVDHPHGGGEGRNFGKHPVTPWGLQTKGKKTRKNKRT). A compositionally biased stretch (basic residues) spans 253 to 263 (KGKKTRKNKRT).

It belongs to the universal ribosomal protein uL2 family. In terms of assembly, part of the 50S ribosomal subunit. Forms a bridge to the 30S subunit in the 70S ribosome.

In terms of biological role, one of the primary rRNA binding proteins. Required for association of the 30S and 50S subunits to form the 70S ribosome, for tRNA binding and peptide bond formation. It has been suggested to have peptidyltransferase activity; this is somewhat controversial. Makes several contacts with the 16S rRNA in the 70S ribosome. This chain is Large ribosomal subunit protein uL2, found in Buchnera aphidicola subsp. Schizaphis graminum (strain Sg).